A 500-amino-acid polypeptide reads, in one-letter code: Intermediate filament protein ifc-1 (500 aa).

The interval 1–36 (MSLYGGIPTNLVSGMSSAGAICTTQIRDAREREKRE) is head. The region spanning 33 to 383 (EKREIGLLND…VLLNGANVTT (351 aa)) is the IF rod domain. Positions 37–68 (IGLLNDRLADYIEKVRFLKAQNHVLSHDIEIL) are coil 1A. Residues 69 to 81 (RRGFSGGGHISSF) are linker 1. Residues 82–219 (FESEISNCTV…TENSSRIEQE (138 aa)) form a coil 1B region. The linker 12 stretch occupies residues 220–237 (LIYIHRDTTLENRDYFRQ). Positions 238–383 (ELQAAMRDIR…VLLNGANVTT (146 aa)) are coil 2. Positions 384–496 (YVSNSTGAAG…RHHESSYSYS (113 aa)) are tail.

It belongs to the intermediate filament family.

Its subcellular location is the cytoplasm. Its function is as follows. Cytoplasmic intermediate filaments provide mechanical strength to cells. Not essential protein. In Caenorhabditis elegans, this protein is Intermediate filament protein ifc-1 (ifc-1).